Here is a 127-residue protein sequence, read N- to C-terminus: Large ribosomal subunit protein bL12 (127 aa).

The protein belongs to the bacterial ribosomal protein bL12 family. In terms of assembly, homodimer. Part of the ribosomal stalk of the 50S ribosomal subunit. Forms a multimeric L10(L12)X complex, where L10 forms an elongated spine to which 2 to 4 L12 dimers bind in a sequential fashion. Binds GTP-bound translation factors.

Functionally, forms part of the ribosomal stalk which helps the ribosome interact with GTP-bound translation factors. Is thus essential for accurate translation. This is Large ribosomal subunit protein bL12 from Streptomyces coelicolor (strain ATCC BAA-471 / A3(2) / M145).